A 206-amino-acid chain; its full sequence is Uridine kinase (206 aa).

11–18 (GGTGSGKS) serves as a coordination point for ATP.

This sequence belongs to the uridine kinase family.

It localises to the cytoplasm. The catalysed reaction is uridine + ATP = UMP + ADP + H(+). It catalyses the reaction cytidine + ATP = CMP + ADP + H(+). The protein operates within pyrimidine metabolism; CTP biosynthesis via salvage pathway; CTP from cytidine: step 1/3. Its pathway is pyrimidine metabolism; UMP biosynthesis via salvage pathway; UMP from uridine: step 1/1. This Clostridium botulinum (strain 657 / Type Ba4) protein is Uridine kinase.